Here is a 568-residue protein sequence, read N- to C-terminus: DEAD-box ATP-dependent RNA helicase 51 (568 aa).

Basic and acidic residues-rich tracts occupy residues 1–13 and 23–47; these read MVES…EELK and KKNE…TQKK. Residues 1–70 are disordered; it reads MVESDKSSVE…EEEEKVEAME (70 aa). Positions 13-78 form a coiled coil; the sequence is KKRVRKRSRG…MEDGEDEKNI (66 aa). Residues 60–70 are compositionally biased toward acidic residues; the sequence is EEEEEKVEAME. A Q motif motif is present at residues 89-117; the sequence is VTFDSLDLSEQTSIAIKEMGFQYMTQIQA. The Helicase ATP-binding domain occupies 120 to 295; that stretch reads IQPLLEGKDV…RVSLTSPVHV (176 aa). Position 133–140 (133–140) interacts with ATP; sequence ARTGSGKT. The DEAD box motif lies at 243-246; that stretch reads DEAD. A Helicase C-terminal domain is found at 321 to 468; it reads RLILLISFLK…ELEFNEKRLS (148 aa). Residues 540 to 568 form a disordered region; the sequence is KVRKARKQQGRNGFSPYSPYGKSTPTKEA.

This sequence belongs to the DEAD box helicase family. DDX18/HAS1 subfamily.

It catalyses the reaction ATP + H2O = ADP + phosphate + H(+). The sequence is that of DEAD-box ATP-dependent RNA helicase 51 (RH51) from Arabidopsis thaliana (Mouse-ear cress).